The chain runs to 261 residues: Flap endonuclease Xni (261 aa).

Residue Asp105 coordinates Mg(2+). In terms of domain architecture, 5'-3' exonuclease spans 164 to 256 (SQFLDLMALA…DFRVNSPTKA (93 aa)). 5 residues coordinate K(+): Leu172, Ala173, Pro181, Ile183, and Ile186. The interaction with DNA stretch occupies residues 185 to 190 (GIGPKS).

Belongs to the Xni family. The cofactor is Mg(2+). Requires K(+) as cofactor.

Its function is as follows. Has flap endonuclease activity. During DNA replication, flap endonucleases cleave the 5'-overhanging flap structure that is generated by displacement synthesis when DNA polymerase encounters the 5'-end of a downstream Okazaki fragment. The chain is Flap endonuclease Xni from Shewanella oneidensis (strain ATCC 700550 / JCM 31522 / CIP 106686 / LMG 19005 / NCIMB 14063 / MR-1).